Consider the following 192-residue polypeptide: Peptidyl-tRNA hydrolase (192 aa).

Tyr18 is a binding site for tRNA. The Proton acceptor role is filled by His23. Phe69, Asn71, and Asn117 together coordinate tRNA.

This sequence belongs to the PTH family. Monomer.

It is found in the cytoplasm. It carries out the reaction an N-acyl-L-alpha-aminoacyl-tRNA + H2O = an N-acyl-L-amino acid + a tRNA + H(+). Functionally, hydrolyzes ribosome-free peptidyl-tRNAs (with 1 or more amino acids incorporated), which drop off the ribosome during protein synthesis, or as a result of ribosome stalling. Its function is as follows. Catalyzes the release of premature peptidyl moieties from peptidyl-tRNA molecules trapped in stalled 50S ribosomal subunits, and thus maintains levels of free tRNAs and 50S ribosomes. The polypeptide is Peptidyl-tRNA hydrolase (Neisseria meningitidis serogroup B (strain ATCC BAA-335 / MC58)).